Consider the following 370-residue polypeptide: Vasopressin V2 receptor (370 aa).

The interval 1–28 (MLRATTSAVPRALSWPAAPGNGSEREPL) is disordered. Topologically, residues 1–37 (MLRATTSAVPRALSWPAAPGNGSEREPLDDRDPLLAR) are extracellular. A glycan (N-linked (GlcNAc...) asparagine) is linked at asparagine 21. The chain crosses the membrane as a helical span at residues 38 to 62 (VELALLSTVFVAVALSNGLVLGALV). The Cytoplasmic portion of the chain corresponds to 63 to 76 (RRGRRGRWAPMHVF). A helical transmembrane segment spans residues 77–97 (IGHLCLADLAVALFQVLPQLA). The Extracellular segment spans residues 98-112 (WDATYRFRGPDALCR). The chain crosses the membrane as a helical span at residues 113–134 (AVKYLQMVGMYASSYMILAMTL). Over 135–158 (DRHRAICRPMLAYRHGGGARWNRP) the chain is Cytoplasmic. The helical transmembrane segment at 159–179 (VLVAWAFSLLLSLPQLFIFAQ) threads the bilayer. The Extracellular portion of the chain corresponds to 180 to 199 (RDVGDGSGVLDCWASFAEPW). Residues 200–219 (GLRAYVTWIALMVFVAPALG) form a helical membrane-spanning segment. Residues 220 to 270 (IAACQVLIFREIHTSLVPGPAERAGGHRGGRRAGSPREGARVSAAMAKTAR) are Cytoplasmic-facing. Residues 271 to 292 (MTLVIVAVYVLCWAPFFLVQLW) form a helical membrane-spanning segment. Topologically, residues 293 to 307 (SVWDPKAPREGPPFV) are extracellular. A helical transmembrane segment spans residues 308 to 327 (LLMLLASLNSCTNPWIYASF). Over 328-370 (SSSISSELRSLLCCPRRRTPPSLRPQEESCATASSFSARDTSS) the chain is Cytoplasmic. 2 S-palmitoyl cysteine lipidation sites follow: cysteine 340 and cysteine 341. Positions 347–370 (PPSLRPQEESCATASSFSARDTSS) are disordered. Polar residues predominate over residues 356-370 (SCATASSFSARDTSS).

The protein belongs to the G-protein coupled receptor 1 family. Vasopressin/oxytocin receptor subfamily. As to quaternary structure, interacts with ARRDC4. Identified in a complex containing at least ARRDC4, V2R and HGS. Interacts with TMEM147.

The protein localises to the cell membrane. Functionally, receptor for arginine vasopressin. The activity of this receptor is mediated by G proteins which activate adenylate cyclase. Involved in renal water reabsorption. The sequence is that of Vasopressin V2 receptor (AVPR2) from Sus scrofa (Pig).